The sequence spans 1209 residues: Protein phosphatase 1 regulatory subunit 26 (1209 aa).

9 disordered regions span residues 57 to 91, 145 to 279, 291 to 471, 501 to 532, 555 to 694, 733 to 836, 848 to 1033, 1052 to 1072, and 1118 to 1209; these read DGAA…TVHK, SGAA…HRQG, KPPR…VERS, GSDG…DSDD, GESC…EDLD, EQLG…SNDS, KAKE…FAHQ, RGGV…GLPS, and AFRE…VVKV. Positions 63-91 are enriched in basic and acidic residues; it reads TSDERAAQRGHRAEGCHDARPAAKPTVHK. The segment covering 201 to 219 has biased composition (low complexity); sequence QVGSSKDQGSASPVSVSSD. The span at 226-255 shows a compositional bias: basic and acidic residues; it reads IRAEIEQFLNEKRQHETQKCDGSVEKKPDT. Residues 301 to 321 show a composition bias toward polar residues; that stretch reads QPRSLRSKVTTTQENEGSTKP. Residues 352–362 are compositionally biased toward low complexity; sequence SAAQASEASDS. The segment covering 442–454 has biased composition (basic and acidic residues); it reads DTDHAPKLLKETK. Basic and acidic residues-rich tracts occupy residues 609-637, 667-685, and 757-766; these read KMQE…RRDL, KTDE…DKSS, and SKRDSGEGPG. 2 stretches are compositionally biased toward low complexity: residues 821 to 836 and 852 to 861; these read PGSL…SNDS and SVSSSEVQAE. Position 1161 is a phosphoserine (serine 1161). A compositionally biased stretch (low complexity) spans 1187 to 1209; sequence GSDASDFSDTSTEDSGGSSVVKV.

Interacts with UTP20 and PPP1CA. As to expression, ubiquitous in normal tissues. Expressed in numerous adenocarcinoma cell lines.

Its subcellular location is the nucleus. The protein resides in the nucleolus. In terms of biological role, inhibits phosphatase activity of protein phosphatase 1 (PP1) complexes. May positively regulate cell proliferation. This chain is Protein phosphatase 1 regulatory subunit 26 (PPP1R26), found in Homo sapiens (Human).